Reading from the N-terminus, the 449-residue chain is Glucose-6-phosphate isomerase (449 aa).

Residue Glu291 is the Proton donor of the active site. Catalysis depends on residues His312 and Lys426.

This sequence belongs to the GPI family.

Its subcellular location is the cytoplasm. It catalyses the reaction alpha-D-glucose 6-phosphate = beta-D-fructose 6-phosphate. It functions in the pathway carbohydrate biosynthesis; gluconeogenesis. Its pathway is carbohydrate degradation; glycolysis; D-glyceraldehyde 3-phosphate and glycerone phosphate from D-glucose: step 2/4. Its function is as follows. Catalyzes the reversible isomerization of glucose-6-phosphate to fructose-6-phosphate. The chain is Glucose-6-phosphate isomerase from Streptococcus mutans serotype c (strain ATCC 700610 / UA159).